Here is a 139-residue protein sequence, read N- to C-terminus: Acyl carrier protein 5, chloroplastic (139 aa).

Residues 1–54 (MATSFCSSISMQAPFSATTTRFCLNKQATIFNNEKTNNLSFSLRRLMPARLAVS) constitute a chloroplast transit peptide. The Carrier domain occupies 59-134 (QETVEKVSEI…QAAELIEELV (76 aa)). S94 is subject to O-(pantetheine 4'-phosphoryl)serine.

Belongs to the acyl carrier protein (ACP) family. Post-translationally, 4'-phosphopantetheine is transferred from CoA to a specific serine of apo-ACP by acpS. This modification is essential for activity because fatty acids are bound in thioester linkage to the sulfhydryl of the prosthetic group.

The protein localises to the plastid. The protein resides in the chloroplast. In terms of biological role, carrier of the growing fatty acid chain in fatty acid biosynthesis. This is Acyl carrier protein 5, chloroplastic (ACP5) from Arabidopsis thaliana (Mouse-ear cress).